The chain runs to 391 residues: Phosphoglycerate kinase (391 aa).

Substrate is bound by residues 21 to 23, arginine 36, 59 to 62, arginine 113, and arginine 146; these read DLN and HLGR. ATP-binding positions include lysine 197, glutamate 319, and 345–348; that span reads GGDT.

The protein belongs to the phosphoglycerate kinase family. Monomer.

Its subcellular location is the cytoplasm. It carries out the reaction (2R)-3-phosphoglycerate + ATP = (2R)-3-phospho-glyceroyl phosphate + ADP. Its pathway is carbohydrate degradation; glycolysis; pyruvate from D-glyceraldehyde 3-phosphate: step 2/5. This Shewanella baltica (strain OS195) protein is Phosphoglycerate kinase.